The following is a 645-amino-acid chain: MSDEDNNYDDFMLSDDEGMESIEMEEETDDEDKQNIEINEDNSQDDQDRGAARHKQHEQGTFEKHDRVEDICERIFEQGQALKEDERYKEARDLFLKIYYKEEFSSDESIERLMTWKFKSLIEILRLRALQLYFQKNGAQDLVLQILEDTATMSVFLQRIDFQIDGNIFELLSDTFEVLAPKWERVFLFDIEKVDRENMICKIDFQKNFMDQFQWILRKPGKDCKLQNLQRIIRKKIFIAVVWYQRLTMGNVFTPEISSQIEILVKDNECSSFEENNDLESVSMLLQYYILEYMNTARINNRRLFKKCIDFFEMLISKSLTFSQESGLMVILYTSKIVFILDSDSENDLSFALMRYYDRKEELKNMFLYILKHLEEMGKLRERDITSLFHKFILSGFIFTSMILEAISTDKINPFGFEQVKIALGSPIVNVLEDVYRCFAQLELRQLNASISLIPELSVVLSGIIQDIYYLAQTLKLWRKIARLYSCISISDIISMLQISDDNEMTRDDLLTILMRSIMKNRSVVYFKLDLTSDLVYFGDENKVMLPRCSKEEFRLMISPKDEETTEKARLIDFEYVNDVAIYNNPTRIRTKSSKEFFNTLRKSRETVKLPRVSNQSNEDTFLPSYMKFSNKYLELCKLASNNLE.

The span at 1–45 (MSDEDNNYDDFMLSDDEGMESIEMEEETDDEDKQNIEINEDNSQD) shows a compositional bias: acidic residues. The segment at 1–63 (MSDEDNNYDD…HKQHEQGTFE (63 aa)) is disordered. The span at 46–63 (DQDRGAARHKQHEQGTFE) shows a compositional bias: basic and acidic residues. The region spanning 348 to 543 (DLSFALMRYY…DLVYFGDENK (196 aa)) is the PCI domain.

In terms of assembly, component of a COP9 signalosome-like (CSN) complex, composed of at least RRI1/CSN5, CSN9, RRI2/CSN10, PCI8/CSN11, CSN12 and CSI1. In the complex, it probably interacts directly with CSN12.

It is found in the cytoplasm. The protein resides in the nucleus. In terms of biological role, component of the COP9 signalosome (CSN) complex that acts as an regulator of the ubiquitin (Ubl) conjugation pathway by mediating the deneddylation of the cullin subunit of SCF-type E3 ubiquitin-protein ligase complexes. The CSN complex is involved in the regulation of the mating pheromone response. The sequence is that of COP9 signalosome complex subunit 10 (RRI2) from Saccharomyces cerevisiae (strain ATCC 204508 / S288c) (Baker's yeast).